A 70-amino-acid polypeptide reads, in one-letter code: Antimicrobial peptide VpCT1 (70 aa).

Positions 1-23 (MKNQFAVLLVALVLLQLFSQSEA) are cleaved as a signal peptide. Leucine amide is present on Leu-36. The propeptide occupies 37–70 (GKRGLRNFDLEQMDDTYEPELSEADLRYLQDLLR).

This sequence belongs to the non-disulfide-bridged peptide (NDBP) superfamily. Short antimicrobial peptide (group 4) family. In terms of tissue distribution, expressed by the venom gland.

It is found in the secreted. Its subcellular location is the target cell membrane. Functionally, antimicrobial peptide with potent activity against bacteria S.aureus (MIC=4.7 uM) and E.coli (MIC=31.5 uM), and pathogenic yeasts C.albicans (MIC=25 uM) and C.glabrata (MIC=12.5 uM). Is not very effective against P.aeruginosa (MIC=150 and &gt;300 uM). Also provokes moderate hemolysis on human erythrocytes (HC(50)=10.5 uM). This is Antimicrobial peptide VpCT1 from Mesomexovis punctatus (Scorpion).